We begin with the raw amino-acid sequence, 217 residues long: Neurotrophic factor BDNF precursor form (217 aa).

The propeptide occupies 1-108 (PMKEVSIRGQ…AANMSMRVRR (108 aa)). Asn-101 carries an N-linked (GlcNAc...) asparagine glycan. Cystine bridges form between Cys-121–Cys-188 and Cys-166–Cys-217.

It belongs to the NGF-beta family.

The protein resides in the secreted. Functionally, promotes the survival of neuronal populations that are all located either in the central nervous system or directly connected to it. The protein is Neurotrophic factor BDNF precursor form (BDNF) of Acrantophis dumerili (Dumeril's ground boa).